The primary structure comprises 413 residues: Extracellular sucrase (413 aa).

Asp44 (nucleophile) is an active-site residue. Glu276 functions as the Proton donor/acceptor in the catalytic mechanism.

This sequence belongs to the glycosyl hydrolase 68 family.

It is found in the secreted. The catalysed reaction is Hydrolysis of terminal non-reducing beta-D-fructofuranoside residues in beta-D-fructofuranosides.. The sequence is that of Extracellular sucrase (sacC) from Zymomonas mobilis subsp. mobilis (strain ATCC 10988 / DSM 424 / LMG 404 / NCIMB 8938 / NRRL B-806 / ZM1).